The chain runs to 312 residues: Cytochrome c biogenesis protein CcsA (312 aa).

8 helical membrane-spanning segments follow: residues 9-29 (ILTH…LITF), 44-64 (GIIV…ISSG), 71-91 (LYES…IPYF), 111-131 (GFAT…VPAL), 143-163 (MILG…LLVI), 216-236 (VISL…VWAN), 251-271 (WAFI…NINL), and 277-297 (AIIA…VNLL).

It belongs to the CcmF/CycK/Ccl1/NrfE/CcsA family. May interact with Ccs1.

The protein resides in the plastid. It is found in the chloroplast thylakoid membrane. Functionally, required during biogenesis of c-type cytochromes (cytochrome c6 and cytochrome f) at the step of heme attachment. The chain is Cytochrome c biogenesis protein CcsA from Atropa belladonna (Belladonna).